We begin with the raw amino-acid sequence, 638 residues long: Growth hormone receptor (638 aa).

Residues 1–18 (MDLWQLLLTLAVAGSGNA) form the signal peptide. Topologically, residues 19-264 (VSGSEATPAI…SPFACEEDFQ (246 aa)) are extracellular. Cystine bridges form between Cys56-Cys66 and Cys101-Cys112. N-linked (GlcNAc...) asparagine glycosylation occurs at Asn115. A disulfide bridge connects residues Cys126 and Cys140. One can recognise a Fibronectin type-III domain in the interval 151-254 (PPIGLNWTLL…EVLYVALPQM (104 aa)). N-linked (GlcNAc...) asparagine glycans are attached at residues Asn156, Asn161, and Asn200. The short motif at 240–244 (YGEFS) is the WSXWS motif element. The chain crosses the membrane as a helical span at residues 265–288 (FPWFLIIIFGIFGLTMILFLFIFS). Residues 289 to 638 (KQQRIKMLIL…STDQLNKIMP (350 aa)) lie on the Cytoplasmic side of the membrane. A required for JAK2 binding region spans residues 294-379 (KMLILPPVPV…HEKSLNILGA (86 aa)). Positions 297–305 (ILPPVPVPK) match the Box 1 motif motif. The short motif at 340-349 (DSWVEFIELD) is the UbE motif element. Ser341 carries the post-translational modification Phosphoserine. Over residues 429–446 (KNQSNSPSTDTAPNTQQP) the composition is skewed to polar residues. The segment at 429 to 448 (KNQSNSPSTDTAPNTQQPGV) is disordered. 2 positions are modified to phosphotyrosine: Tyr487 and Tyr595.

This sequence belongs to the type I cytokine receptor family. Type 1 subfamily. On growth hormone (GH) binding, forms homodimers and binds JAK2 via a box 1-containing domain. Post-translationally, the soluble form (GHBP) is produced by phorbol ester-promoted proteolytic cleavage at the cell surface (shedding) by ADAM17/TACE. Shedding is inhibited by growth hormone (GH) binding to the receptor probably due to a conformational change in GHR rendering the receptor inaccessible to ADAM17. On GH binding, phosphorylated on tyrosine residues in the cytoplasmic domain by JAK2. In terms of processing, ubiquitinated by the ECS(SOCS2) complex following ligand-binding and phosphorylation by JAK2, leading to its degradation by the proteasome. Regulation by the ECS(SOCS2) complex acts as a negative feedback loop of growth hormone receptor signaling. Ubiquitination is not sufficient for GHR internalization.

Its subcellular location is the cell membrane. The protein localises to the secreted. Receptor for pituitary gland growth hormone (GH1) involved in regulating postnatal body growth. On ligand binding, couples to the JAK2/STAT5 pathway. Functionally, the soluble form (GHBP) acts as a reservoir of growth hormone in plasma and may be a modulator/inhibitor of GH signaling. The protein is Growth hormone receptor (GHR) of Ailuropoda melanoleuca (Giant panda).